Here is a 682-residue protein sequence, read N- to C-terminus: RNA helicase NPH-II (682 aa).

The 174-residue stretch at Phe181 to His354 folds into the Helicase ATP-binding domain. Gly194 to Thr201 contacts ATP. The short motif at Asp303–His306 is the DEXH box element. In terms of domain architecture, Helicase C-terminal spans Asn386–Leu551.

This sequence belongs to the DEAD box helicase family. DEAH subfamily. In terms of assembly, monomer.

The protein resides in the virion. It carries out the reaction ATP + H2O = ADP + phosphate + H(+). Its function is as follows. NTP-dependent helicase that catalyzes unidirectional unwinding of 3'tailed duplex RNAs and plays an important role during transcription of early mRNAs, presumably by preventing R-loop formation behind the elongating RNA polymerase. Might also play a role in the export of newly synthesized mRNA chains out of the core into the cytoplasm. Required for replication and propagation of viral particles. The chain is RNA helicase NPH-II (NPH2) from Vertebrata (FPV).